The chain runs to 892 residues: Protein translocase subunit SecA (892 aa).

ATP contacts are provided by residues Q89, 107–111 (GEGKT), and D517. The Zn(2+) site is built by C879, C881, C890, and H891.

The protein belongs to the SecA family. As to quaternary structure, monomer and homodimer. Part of the essential Sec protein translocation apparatus which comprises SecA, SecYEG and auxiliary proteins SecDF-YajC and YidC. The cofactor is Zn(2+).

Its subcellular location is the cell inner membrane. It localises to the cytoplasm. It carries out the reaction ATP + H2O + cellular proteinSide 1 = ADP + phosphate + cellular proteinSide 2.. Its function is as follows. Part of the Sec protein translocase complex. Interacts with the SecYEG preprotein conducting channel. Has a central role in coupling the hydrolysis of ATP to the transfer of proteins into and across the cell membrane, serving as an ATP-driven molecular motor driving the stepwise translocation of polypeptide chains across the membrane. In Ruthia magnifica subsp. Calyptogena magnifica, this protein is Protein translocase subunit SecA.